A 350-amino-acid chain; its full sequence is Arabinogalactan endo-beta-1,4-galactanase A (350 aa).

An N-terminal signal peptide occupies residues 1-16; the sequence is MIYPLLLSALPLLSSA. The N-linked (GlcNAc...) asparagine glycan is linked to Asn128. Glu152 (proton donor) is an active-site residue. The active-site Nucleophile is the Glu262.

It belongs to the glycosyl hydrolase 53 family.

The protein localises to the secreted. It carries out the reaction The enzyme specifically hydrolyzes (1-&gt;4)-beta-D-galactosidic linkages in type I arabinogalactans.. Its function is as follows. Endogalactanase involved in the degradation of plant cell wall polysaccharides, and more particularly of hairy regions of pectin. The protein is Arabinogalactan endo-beta-1,4-galactanase A (galA) of Aspergillus niger.